The following is a 231-amino-acid chain: Cytochrome c oxidase subunit 2 (231 aa).

The Mitochondrial intermembrane portion of the chain corresponds to 1–14; that stretch reads MATPAQLGLQNATS. Residues 15-45 form a helical membrane-spanning segment; it reads PIMEELIAFHDHALMIIFLISSLVLYIISLM. Over 46–59 the chain is Mitochondrial matrix; it reads LTTKLTHTSTMNAQ. A helical transmembrane segment spans residues 60-87; sequence EIEMIWTILPAIILIMIALPSLRILYMT. At 88-231 the chain is on the mitochondrial intermembrane side; the sequence is DEFNKPYLTL…WASYLYIVSL (144 aa). Residues histidine 161, cysteine 196, glutamate 198, cysteine 200, histidine 204, and methionine 207 each coordinate Cu cation. Glutamate 198 provides a ligand contact to Mg(2+).

The protein belongs to the cytochrome c oxidase subunit 2 family. Component of the cytochrome c oxidase (complex IV, CIV), a multisubunit enzyme composed of 14 subunits. The complex is composed of a catalytic core of 3 subunits MT-CO1, MT-CO2 and MT-CO3, encoded in the mitochondrial DNA, and 11 supernumerary subunits COX4I, COX5A, COX5B, COX6A, COX6B, COX6C, COX7A, COX7B, COX7C, COX8 and NDUFA4, which are encoded in the nuclear genome. The complex exists as a monomer or a dimer and forms supercomplexes (SCs) in the inner mitochondrial membrane with NADH-ubiquinone oxidoreductase (complex I, CI) and ubiquinol-cytochrome c oxidoreductase (cytochrome b-c1 complex, complex III, CIII), resulting in different assemblies (supercomplex SCI(1)III(2)IV(1) and megacomplex MCI(2)III(2)IV(2)). Found in a complex with TMEM177, COA6, COX18, COX20, SCO1 and SCO2. Interacts with TMEM177 in a COX20-dependent manner. Interacts with COX20. Interacts with COX16. It depends on Cu cation as a cofactor.

It localises to the mitochondrion inner membrane. It catalyses the reaction 4 Fe(II)-[cytochrome c] + O2 + 8 H(+)(in) = 4 Fe(III)-[cytochrome c] + 2 H2O + 4 H(+)(out). Its function is as follows. Component of the cytochrome c oxidase, the last enzyme in the mitochondrial electron transport chain which drives oxidative phosphorylation. The respiratory chain contains 3 multisubunit complexes succinate dehydrogenase (complex II, CII), ubiquinol-cytochrome c oxidoreductase (cytochrome b-c1 complex, complex III, CIII) and cytochrome c oxidase (complex IV, CIV), that cooperate to transfer electrons derived from NADH and succinate to molecular oxygen, creating an electrochemical gradient over the inner membrane that drives transmembrane transport and the ATP synthase. Cytochrome c oxidase is the component of the respiratory chain that catalyzes the reduction of oxygen to water. Electrons originating from reduced cytochrome c in the intermembrane space (IMS) are transferred via the dinuclear copper A center (CU(A)) of subunit 2 and heme A of subunit 1 to the active site in subunit 1, a binuclear center (BNC) formed by heme A3 and copper B (CU(B)). The BNC reduces molecular oxygen to 2 water molecules using 4 electrons from cytochrome c in the IMS and 4 protons from the mitochondrial matrix. In Aotus nigriceps (Black-headed night monkey), this protein is Cytochrome c oxidase subunit 2 (MT-CO2).